The following is a 131-amino-acid chain: Phosphoribosyl-AMP cyclohydrolase (131 aa).

Asp-76 provides a ligand contact to Mg(2+). Cys-77 serves as a coordination point for Zn(2+). Asp-78 and Asp-80 together coordinate Mg(2+). Positions 94 and 101 each coordinate Zn(2+).

Belongs to the PRA-CH family. As to quaternary structure, homodimer. Mg(2+) is required as a cofactor. Zn(2+) serves as cofactor.

It is found in the cytoplasm. The enzyme catalyses 1-(5-phospho-beta-D-ribosyl)-5'-AMP + H2O = 1-(5-phospho-beta-D-ribosyl)-5-[(5-phospho-beta-D-ribosylamino)methylideneamino]imidazole-4-carboxamide. It functions in the pathway amino-acid biosynthesis; L-histidine biosynthesis; L-histidine from 5-phospho-alpha-D-ribose 1-diphosphate: step 3/9. Catalyzes the hydrolysis of the adenine ring of phosphoribosyl-AMP. This chain is Phosphoribosyl-AMP cyclohydrolase, found in Stutzerimonas stutzeri (strain A1501) (Pseudomonas stutzeri).